The chain runs to 463 residues: Exodeoxyribonuclease 7 large subunit (463 aa).

It belongs to the XseA family. In terms of assembly, heterooligomer composed of large and small subunits.

The protein localises to the cytoplasm. The enzyme catalyses Exonucleolytic cleavage in either 5'- to 3'- or 3'- to 5'-direction to yield nucleoside 5'-phosphates.. Bidirectionally degrades single-stranded DNA into large acid-insoluble oligonucleotides, which are then degraded further into small acid-soluble oligonucleotides. This is Exodeoxyribonuclease 7 large subunit from Bordetella bronchiseptica (strain ATCC BAA-588 / NCTC 13252 / RB50) (Alcaligenes bronchisepticus).